Consider the following 608-residue polypeptide: Serine/threonine-protein kinase BUR1 (608 aa).

In terms of domain architecture, Protein kinase spans 39-346; sequence YEIIQKLGQG…ALDALNHNYF (308 aa). Residues 45-53 and Lys68 contribute to the ATP site; that span reads LGQGTFGVV. Catalysis depends on Asp174, which acts as the Proton acceptor. 2 disordered regions span residues 383–419 and 443–571; these read HEANKIPKAHFPKGPGEYNNSNNYPRNRNGSFPLALP and YIPK…FDED. Residues 400–411 are compositionally biased toward low complexity; sequence YNNSNNYPRNRN. Positions 471-482 are enriched in basic and acidic residues; it reads LRDRSPRREGHI. The segment covering 487 to 502 has biased composition (low complexity); it reads STTNSNNISSNSSASN. Polar residues-rich tracts occupy residues 503 to 512 and 539 to 548; these read VGGTLSNPTH and PQSSSRNVSD. The span at 559-571 shows a compositional bias: acidic residues; it reads EQNESDLTDFDED.

This sequence belongs to the protein kinase superfamily. CMGC Ser/Thr protein kinase family. CDC2/CDKX subfamily.

It localises to the nucleus. The catalysed reaction is L-seryl-[protein] + ATP = O-phospho-L-seryl-[protein] + ADP + H(+). The enzyme catalyses L-threonyl-[protein] + ATP = O-phospho-L-threonyl-[protein] + ADP + H(+). It catalyses the reaction [DNA-directed RNA polymerase] + ATP = phospho-[DNA-directed RNA polymerase] + ADP + H(+). Functionally, serine/threonine-protein kinase involved in transcription regulation. Phosphorylates the UBC2/RAD6 ubiquitin-conjugating enzyme (E2), leading to monoubiquitination of histone H2B and the silencing of telomeric-associated genes. Also required for histone H3 methylation. Necessary for the recovery from pheromone-induced growth arrest in the cell cycle G1 phase. The protein is Serine/threonine-protein kinase BUR1 (BUR1) of Debaryomyces hansenii (strain ATCC 36239 / CBS 767 / BCRC 21394 / JCM 1990 / NBRC 0083 / IGC 2968) (Yeast).